Consider the following 86-residue polypeptide: Maxadilan (86 aa).

A signal peptide spans 1–23 (MKQILLISLVVVLAVFAFNVAEG). Cystine bridges form between Cys-24–Cys-28 and Cys-37–Cys-74.

As to quaternary structure, interacts with human ADCYAP1R1. As to expression, salivary gland (at protein level).

The protein resides in the secreted. Its function is as follows. Potent vasodilator. Activates mammalian ADCYAP1R1, a PAC1 receptor, and induces cAMP accumulation in host cells. Causes the development of erythema following superficial injection into the rabbit or human skin. Influences adaptive immune responses mediated by host dendritic cells. Reduces surface expression of CD80 on host dendritic cells stimulated with lipopolysaccharides (LPS) and induces concomitant increase in CD86 expression on a subpopulation of these cells. Redirects cytokine secretion by LPS-activated host dendritic cells toward type 2 responses: decreases secretion of TNF-alpha/TNF, IL-12p40/IL12B and IFN-gamma/IFNG, and increases secretion of IL6 and IL10. Reduces ability of host bone marrow-derived dendritic cells to stimulate proliferation of CD4(+) T-cells. Reprograms the effect of LPS-activated host dendritic cells on cytokine secretion profiles in host T-cells: decreases secretion of TNF-alpha/TNF and IFN-gamma/IFNG, increases secretion of IL6 and IL13, and increases secretion of pro-inflammatory cytokine IL-1beta/IL1B in mixed lymphocyte reaction (MLR) cultures. Reduces LPS-induced up-regulation of CCR7 in activated host dendritic cells. Inhibits IFN-gamma/IFNG and IL-12p40/IL12B production by human peripheral blood mononuclear cells. Increases IL6 and decreases TNF-alpha/TNF production by LPS-stimulated human monocytes. Functionally, (Microbial infection) Probably plays a critical role in the enhancement of Leishmania infectivity in the host attributed to sand fly saliva. The chain is Maxadilan from Lutzomyia longipalpis (Sand fly).